The following is a 238-amino-acid chain: MLPKSSLKETQQALANAIRLGNADPLNGYAASRLAVYTRLVRNNAFGFIDRCFVEAPLHIEPEYWKNAKENFVQNGNAHSPYFQDIAGEFLLFCQEKEIFDTNILALMDFENTQLLAEVSLAKVPEKFEWNRHSVMQLSGAAYLKSYDVDFLSSDFKQFDDTPIQAIIWRDSDFRIQQQILSELDYWLLSYLQEQPNSLENVLSALNTMVEDSTSIIPLLEQVWMKWVTSEVIYPEQR.

This is an uncharacterized protein from Haemophilus influenzae (strain ATCC 51907 / DSM 11121 / KW20 / Rd).